The primary structure comprises 142 residues: Hemoglobin subunit alpha-4 (142 aa).

The Globin domain occupies 2-142 (TLTDSDKAAI…VATVLTSKYR (141 aa)). An O2-binding site is contributed by His-59. His-88 is a heme b binding site.

This sequence belongs to the globin family. In terms of assembly, heterotetramer of two alpha chains and two beta chains. Red blood cells.

In terms of biological role, this is a larval (tadpole) alpha-globin. This Xenopus laevis (African clawed frog) protein is Hemoglobin subunit alpha-4 (hba4).